The primary structure comprises 241 residues: Glucosamine-6-phosphate deaminase (241 aa).

The Proton acceptor; for enolization step role is filled by aspartate 67. The active-site For ring-opening step is asparagine 136. The active-site Proton acceptor; for ring-opening step is histidine 138. Glutamate 143 functions as the For ring-opening step in the catalytic mechanism.

Belongs to the glucosamine/galactosamine-6-phosphate isomerase family. NagB subfamily.

The enzyme catalyses alpha-D-glucosamine 6-phosphate + H2O = beta-D-fructose 6-phosphate + NH4(+). The protein operates within amino-sugar metabolism; N-acetylneuraminate degradation; D-fructose 6-phosphate from N-acetylneuraminate: step 5/5. Functionally, catalyzes the reversible isomerization-deamination of glucosamine 6-phosphate (GlcN6P) to form fructose 6-phosphate (Fru6P) and ammonium ion. This chain is Glucosamine-6-phosphate deaminase, found in Clostridium acetobutylicum (strain ATCC 824 / DSM 792 / JCM 1419 / IAM 19013 / LMG 5710 / NBRC 13948 / NRRL B-527 / VKM B-1787 / 2291 / W).